We begin with the raw amino-acid sequence, 458 residues long: Jacalin-related lectin 22 (458 aa).

Jacalin-type lectin domains lie at 5–153, 160–301, and 311–453; these read YRKL…YFVL, LYKL…YFGP, and SKKL…TIVP.

It belongs to the jacalin lectin family. As to quaternary structure, component of the PYK10 complex, at least composed of PYK10/BGLU23, BGLU21, BGLU22, JAL22, JAL23, PBP1/JAL30, PBP2/JAL31, JAL32, JAL33, JAL34, JAL35, GLL22 and GLL23.

In terms of biological role, inhibitor-type lectin that may regulate the correct polymerization and activation of BGLU23/PYK10 upon tissue damage. The protein is Jacalin-related lectin 22 (JAL22) of Arabidopsis thaliana (Mouse-ear cress).